A 684-amino-acid polypeptide reads, in one-letter code: Actin-related protein 5 (684 aa).

Positions 262–469 (KEKSVIIQLP…ARQKQKQKAN (208 aa)) form a coiled coil. Disordered stretches follow at residues 392 to 443 (KEKK…PEHY) and 481 to 500 (VNPT…EDPE). Positions 402–443 (SMKDGRLAQKRKRDEEKEKEKEKEEERDRQEEESFLKDPEHY) are enriched in basic and acidic residues.

It belongs to the actin family. ARP5 subfamily. Component of the chromatin-remodeling Ino80 complex.

The protein localises to the nucleus. Functionally, proposed core component of the chromatin remodeling Ino80 complex which is involved in transcriptional regulation, DNA replication and probably DNA repair. The polypeptide is Actin-related protein 5 (arpE) (Dictyostelium discoideum (Social amoeba)).